We begin with the raw amino-acid sequence, 451 residues long: tRNA-2-methylthio-N(6)-dimethylallyladenosine synthase (451 aa).

The MTTase N-terminal domain maps to Lys-10 to Gln-128. [4Fe-4S] cluster is bound by residues Cys-19, Cys-55, Cys-89, Cys-165, Cys-169, and Cys-172. Residues Arg-151 to Gln-381 form the Radical SAM core domain. The 64-residue stretch at Lys-384–Glu-447 folds into the TRAM domain.

The protein belongs to the methylthiotransferase family. MiaB subfamily. Monomer. It depends on [4Fe-4S] cluster as a cofactor.

The protein localises to the cytoplasm. The enzyme catalyses N(6)-dimethylallyladenosine(37) in tRNA + (sulfur carrier)-SH + AH2 + 2 S-adenosyl-L-methionine = 2-methylsulfanyl-N(6)-dimethylallyladenosine(37) in tRNA + (sulfur carrier)-H + 5'-deoxyadenosine + L-methionine + A + S-adenosyl-L-homocysteine + 2 H(+). Catalyzes the methylthiolation of N6-(dimethylallyl)adenosine (i(6)A), leading to the formation of 2-methylthio-N6-(dimethylallyl)adenosine (ms(2)i(6)A) at position 37 in tRNAs that read codons beginning with uridine. The polypeptide is tRNA-2-methylthio-N(6)-dimethylallyladenosine synthase (Natranaerobius thermophilus (strain ATCC BAA-1301 / DSM 18059 / JW/NM-WN-LF)).